The following is a 327-amino-acid chain: Short chain isoprenyl diphosphate synthase (327 aa).

3 residues coordinate isopentenyl diphosphate: Lys-48, Arg-51, and His-80. Mg(2+) is bound by residues Asp-87 and Asp-91. Residue Arg-96 coordinates an all-trans-polyprenyl diphosphate. Arg-97 lines the isopentenyl diphosphate pocket. An all-trans-polyprenyl diphosphate contacts are provided by Lys-176, Thr-177, Gln-214, Lys-231, and Lys-241.

The protein belongs to the FPP/GGPP synthase family. As to quaternary structure, homodimer. It depends on Mg(2+) as a cofactor.

The protein resides in the cytoplasm. This is Short chain isoprenyl diphosphate synthase (idsA) from Methanocaldococcus jannaschii (strain ATCC 43067 / DSM 2661 / JAL-1 / JCM 10045 / NBRC 100440) (Methanococcus jannaschii).